The chain runs to 233 residues: Uridylate kinase (233 aa).

Residues 8–11 (KLSG), glycine 51, and arginine 55 contribute to the ATP site. UMP contacts are provided by residues aspartate 68 and 129-136 (TSNPFFTT). Threonine 156, tyrosine 162, and aspartate 165 together coordinate ATP.

Belongs to the UMP kinase family. In terms of assembly, homohexamer.

The protein localises to the cytoplasm. It catalyses the reaction UMP + ATP = UDP + ADP. The protein operates within pyrimidine metabolism; CTP biosynthesis via de novo pathway; UDP from UMP (UMPK route): step 1/1. With respect to regulation, inhibited by UTP. Its function is as follows. Catalyzes the reversible phosphorylation of UMP to UDP. The protein is Uridylate kinase of Pseudothermotoga lettingae (strain ATCC BAA-301 / DSM 14385 / NBRC 107922 / TMO) (Thermotoga lettingae).